The following is a 135-amino-acid chain: ATP synthase epsilon chain (135 aa).

It belongs to the ATPase epsilon chain family. As to quaternary structure, F-type ATPases have 2 components, CF(1) - the catalytic core - and CF(0) - the membrane proton channel. CF(1) has five subunits: alpha(3), beta(3), gamma(1), delta(1), epsilon(1). CF(0) has three main subunits: a, b and c.

It localises to the cell inner membrane. In terms of biological role, produces ATP from ADP in the presence of a proton gradient across the membrane. The chain is ATP synthase epsilon chain from Rhizobium etli (strain CIAT 652).